The sequence spans 191 residues: Ion-translocating oxidoreductase complex subunit B (191 aa).

The tract at residues Met1–Ala26 is hydrophobic. The 4Fe-4S domain occupies Glu32–Val90. Positions 49, 52, 57, 73, 114, 117, 120, 124, 144, 147, 150, and 154 each coordinate [4Fe-4S] cluster. 2 consecutive 4Fe-4S ferredoxin-type domains span residues Met105–Arg134 and Gln135–Val164.

The protein belongs to the 4Fe4S bacterial-type ferredoxin family. RnfB subfamily. In terms of assembly, the complex is composed of six subunits: RnfA, RnfB, RnfC, RnfD, RnfE and RnfG. [4Fe-4S] cluster serves as cofactor.

The protein resides in the cell inner membrane. Its function is as follows. Part of a membrane-bound complex that couples electron transfer with translocation of ions across the membrane. The sequence is that of Ion-translocating oxidoreductase complex subunit B from Stutzerimonas stutzeri (strain A1501) (Pseudomonas stutzeri).